The sequence spans 2703 residues: Neurogenic locus Notch protein (2703 aa).

The signal sequence occupies residues 1 to 52 (MQSQRSRRRSRAPNTWICFWINKMHAVASLPASLPLLLLTLAFANLPNTVRG). Topologically, residues 53–1745 (TDTALVAASC…NGEPPANVKY (1693 aa)) are extracellular. EGF-like domains lie at 58-95 (VAAS…DYCE), 96-136 (HRNP…SLCE), 139-176 (VPNA…ERCE), and 177-215 (TKNL…DTCS). 24 disulfide bridges follow: Cys-62-Cys-73, Cys-67-Cys-83, Cys-85-Cys-94, Cys-100-Cys-111, Cys-105-Cys-124, Cys-126-Cys-135, Cys-143-Cys-154, Cys-148-Cys-164, Cys-166-Cys-175, Cys-181-Cys-192, Cys-186-Cys-203, Cys-205-Cys-214, Cys-221-Cys-232, Cys-226-Cys-241, Cys-243-Cys-252, Cys-259-Cys-270, Cys-264-Cys-279, Cys-281-Cys-290, Cys-297-Cys-308, Cys-302-Cys-317, Cys-319-Cys-328, Cys-335-Cys-349, Cys-343-Cys-358, and Cys-360-Cys-369. A glycan (O-linked (Fuc...) threonine) is linked at Thr-72. Thr-110 carries an O-linked (Fuc...) threonine glycan. O-linked (Fuc...) threonine glycosylation occurs at Thr-153. Ser-183 carries an O-linked (Glc...) serine glycan. Thr-191 is a glycosylation site (O-linked (Fuc...) threonine). Residue Thr-210 is glycosylated (O-linked (GlcNAc...) threonine). An EGF-like 5; calcium-binding domain is found at 217 to 253 (DIEECQSNPCKYGGTCVNTHGSYQCMCPTGYTGKDCD). O-linked (Glc...) serine glycosylation is present at Ser-223. Thr-231 is a glycosylation site (O-linked (Fuc...) threonine). The region spanning 255-291 (KYKPCSPSPCQNGGICRSNGLSYECKCPKGFEGKNCE) is the EGF-like 6 domain. In terms of domain architecture, EGF-like 7; calcium-binding spans 293–329 (NYDDCLGHLCQNGGTCIDGISDYTCRCPPNFTGRFCQ). A glycan (O-linked (Fuc...) threonine) is linked at Thr-307. N-linked (GlcNAc...) asparagine glycosylation occurs at Asn-322. In terms of domain architecture, EGF-like 8; calcium-binding spans 331 to 370 (DVDECAQRDHPVCQNGATCTNTHGSYSCICVNGWAGLDCS). Thr-348 is a glycosylation site (O-linked (Fuc...) threonine). Asn-371 is a glycosylation site (N-linked (GlcNAc...) asparagine). The EGF-like 9; calcium-binding domain maps to 372–408 (NTDDCKQAACFYGATCIDGVGSFYCQCTKGKTGLLCH). 8 disulfide bridges follow: Cys-376/Cys-387, Cys-381/Cys-396, Cys-398/Cys-407, Cys-413/Cys-424, Cys-418/Cys-435, Cys-437/Cys-446, Cys-453/Cys-465, and Cys-459/Cys-474. O-linked (Fuc...) threonine glycosylation occurs at Thr-386. In terms of domain architecture, EGF-like 10 spans 409–447 (LDDACTSNPCHADAICDTSPINGSYACSCATGYKGVDCS). The O-linked (Glc...) serine glycan is linked to Ser-427. Asn-430 carries an N-linked (GlcNAc...) asparagine glycan. Residues 449–486 (DIDECDQGSPCEHNGICVNTPGSYRCNCSQGFTGPRCE) form the EGF-like 11; calcium-binding domain. Asn-475 is a glycosylation site (N-linked (GlcNAc...) asparagine). 78 cysteine pairs are disulfide-bonded: Cys-476-Cys-485, Cys-492-Cys-503, Cys-497-Cys-512, Cys-514-Cys-523, Cys-530-Cys-541, Cys-535-Cys-550, Cys-552-Cys-561, Cys-568-Cys-579, Cys-573-Cys-588, Cys-590-Cys-599, Cys-606-Cys-616, Cys-611-Cys-625, Cys-627-Cys-636, Cys-643-Cys-654, Cys-648-Cys-663, Cys-665-Cys-674, Cys-681-Cys-692, Cys-686-Cys-701, Cys-703-Cys-712, Cys-719-Cys-730, Cys-724-Cys-739, Cys-741-Cys-750, Cys-757-Cys-768, Cys-762-Cys-777, Cys-779-Cys-788, Cys-795-Cys-806, Cys-800-Cys-815, Cys-817-Cys-826, Cys-833-Cys-844, Cys-838-Cys-853, Cys-855-Cys-864, Cys-871-Cys-882, Cys-876-Cys-893, Cys-895-Cys-904, Cys-911-Cys-923, Cys-917-Cys-932, Cys-934-Cys-943, Cys-950-Cys-961, Cys-955-Cys-970, Cys-972-Cys-981, Cys-988-Cys-999, Cys-993-Cys-1008, Cys-1010-Cys-1019, Cys-1026-Cys-1037, Cys-1031-Cys-1046, Cys-1048-Cys-1057, Cys-1064-Cys-1075, Cys-1069-Cys-1084, Cys-1086-Cys-1095, Cys-1102-Cys-1113, Cys-1107-Cys-1122, Cys-1124-Cys-1133, Cys-1155-Cys-1160, Cys-1171-Cys-1180, Cys-1187-Cys-1198, Cys-1192-Cys-1207, Cys-1209-Cys-1218, Cys-1225-Cys-1236, Cys-1230-Cys-1245, Cys-1247-Cys-1256, Cys-1263-Cys-1274, Cys-1268-Cys-1283, Cys-1285-Cys-1294, Cys-1301-Cys-1314, Cys-1306-Cys-1323, Cys-1325-Cys-1334, Cys-1341-Cys-1352, Cys-1346-Cys-1361, Cys-1363-Cys-1372, Cys-1379-Cys-1389, Cys-1384-Cys-1400, Cys-1402-Cys-1411, Cys-1419-Cys-1430, Cys-1424-Cys-1439, Cys-1441-Cys-1450, Cys-1482-Cys-1505, Cys-1487-Cys-1500, and Cys-1496-Cys-1512. O-linked (GlcNAc...) threonine glycosylation occurs at Thr-481. The EGF-like 12; calcium-binding domain occupies 488–524 (NINECESHPCQNEGSCLDDPGTFRCVCMPGFTGTQCE). Ser-494 carries an O-linked (Glc...) serine glycan. O-linked (Fuc...) serine glycosylation is present at Ser-502. An O-linked (GlcNAc...) threonine glycan is attached at Thr-519. The EGF-like 13; calcium-binding domain occupies 526-562 (DIDECQSNPCLNDGTCHDKINGFKCSCALGFTGARCQ). Ser-532 is a glycosylation site (O-linked (Glc...) serine). The region spanning 564 to 600 (NIDDCQSQPCRNRGICHDSIAGYSCECPPGYTGTSCE) is the EGF-like 14; calcium-binding domain. Ser-570 carries O-linked (Glc...) serine glycosylation. Thr-595 is a glycosylation site (O-linked (GlcNAc...) threonine). Residues 602 to 637 (NINDCDSNPCHRGKCIDDVNSFKCLCDPGYTGYICQ) enclose the EGF-like 15; calcium-binding domain. Ser-608 is a glycosylation site (O-linked (Glc...) serine). An EGF-like 16; calcium-binding domain is found at 639 to 675 (QINECESNPCQFDGHCQDRVGSYYCQCQAGTSGKNCE). O-linked (Glc...) serine glycosylation occurs at Ser-645. Residues 677–713 (NVNECHSNPCNNGATCIDGINSYKCQCVPGFTGQHCE) form the EGF-like 17; calcium-binding domain. Ser-683 carries O-linked (Glc...) serine glycosylation. Thr-691 is a glycosylation site (O-linked (Fuc...) threonine). The EGF-like 18; calcium-binding domain maps to 715-751 (NVDECISSPCANNGVCIDQVNGYKCECPRGFYDAHCL). An O-linked (Glc...) serine glycan is attached at Ser-721. In terms of domain architecture, EGF-like 19; calcium-binding spans 753 to 789 (DVDECASNPCVNEGRCEDGINEFICHCPPGYTGKRCE). The O-linked (Glc...) serine glycan is linked to Ser-759. Residues 791–827 (DIDECSSNPCQHGGTCYDKLNAFSCQCMPGYTGQKCE) form the EGF-like 20; calcium-binding domain. A glycan (O-linked (Glc...) serine) is linked at Ser-797. O-linked (Fuc...) threonine glycosylation is present at Thr-805. An O-linked (GlcNAc...) threonine glycan is attached at Thr-822. In terms of domain architecture, EGF-like 21; calcium-binding spans 829–865 (NIDDCVTNPCGNGGTCIDKVNGYKCVCKVPFTGRDCE). A glycan (O-linked (Fuc...) threonine) is linked at Thr-843. The EGF-like 22 domain occupies 867 to 905 (KMDPCASNRCKNEAKCTPSSNFLDFSCTCKLGYTGRYCD). The EGF-like 23; calcium-binding domain maps to 907 to 944 (DIDECSLSSPCRNGASCLNVPGSYRCLCTKGYEGRDCA). Ser-922 carries an O-linked (Fuc...) serine glycan. An EGF-like 24; calcium-binding domain is found at 946-982 (NTDDCASFPCQNGGTCLDGIGDYSCLCVDGFDGKHCE). An O-linked (Glc...) serine glycan is attached at Ser-952. The O-linked (Fuc...) threonine glycan is linked to Thr-960. One can recognise an EGF-like 25 domain in the interval 984 to 1020 (DINECLSQPCQNGATCSQYVNSYTCTCPLGFSGINCQ). Ser-990 carries an O-linked (Glc...) serine glycan. O-linked (Fuc...) threonine glycosylation is present at Thr-998. The EGF-like 26; calcium-binding domain maps to 1022–1058 (NDEDCTESSCLNGGSCIDGINGYNCSCLAGYSGANCQ). Ser-1036 carries an O-linked (Fuc...) serine glycan. An N-linked (GlcNAc...) asparagine glycan is attached at Asn-1045. EGF-like domains lie at 1060–1096 (KLNK…KQCS), 1098–1134 (YVDW…KLCD), and 1136–1181 (QTIS…SYCQ). Residue Ser-1066 is glycosylated (O-linked (Glc...) serine). An O-linked (Fuc...) threonine glycan is attached at Thr-1074. O-linked (Fuc...) threonine glycosylation occurs at Thr-1112. N-linked (GlcNAc...) asparagine glycosylation occurs at Asn-1157. An EGF-like 30; calcium-binding domain is found at 1183-1219 (EIDECQSQPCQNGGTCRDLIGAYECQCRQGFQGQNCE). An O-linked (Glc...) serine glycan is attached at Ser-1189. O-linked (Fuc...) threonine glycosylation occurs at Thr-1197. The region spanning 1221 to 1257 (NIDDCAPNPCQNGGTCHDRVMNFSCSCPPGTMGIICE) is the EGF-like 31; calcium-binding domain. O-linked (Fuc...) threonine glycosylation is present at Thr-1235. A glycan (N-linked (GlcNAc...) asparagine) is linked at Asn-1242. One can recognise an EGF-like 32; calcium-binding domain in the interval 1259–1295 (NKDDCKPGACHNNGSCIDRVGGFECVCQPGFVGARCE). Residue Asn-1271 is glycosylated (N-linked (GlcNAc...) asparagine). The O-linked (Fuc...) serine glycan is linked to Ser-1273. 4 consecutive EGF-like domains span residues 1297–1335 (DINE…RHCE), 1337–1373 (KVDF…KNCE), 1375–1412 (SGQD…EHCE), and 1415–1451 (TLDE…KRCD). Ser-1303 carries an O-linked (Glc...) serine glycan. Residue Ser-1381 is glycosylated (O-linked (Glc...) serine). 3 LNR repeats span residues 1482-1521 (CDKR…PWAN), 1522-1557 (CTAN…RKLK), and 1559-1599 (CDSL…TQSP). N-linked (GlcNAc...) asparagine glycosylation is present at Asn-1521. 6 cysteine pairs are disulfide-bonded: Cys-1522/Cys-1545, Cys-1527/Cys-1540, Cys-1536/Cys-1552, Cys-1559/Cys-1585, Cys-1567/Cys-1580, and Cys-1576/Cys-1592. N-linked (GlcNAc...) asparagine glycosylation is found at Asn-1594 and Asn-1627. The chain crosses the membrane as a helical span at residues 1746-1766 (VITGIILVIIALAFFGMVLST). At 1767–2703 (QRKRAHGVTW…ANKGSEAIYI (937 aa)) the chain is on the cytoplasmic side. The interval 1810-1850 (QSQGVGQPGAHWSDDESDMPLPKRQRSDPVSGVGLGNNGGY) is disordered. ANK repeat units lie at residues 1901-1945 (CGLT…ELNA), 1950-1979 (TGET…DANC), 1983-2013 (TGRT…NLNA), 2017-2046 (DGTT…DINA), 2050-2079 (SGKT…NRDA), 2083-2112 (KDET…NREI), and 2116-2139 (MDRL…LDEH). The interval 2172 to 2257 (TVISAGNGGN…LTGGVSGVPG (86 aa)) is disordered. A compositionally biased stretch (low complexity) spans 2228–2238 (KKTSAASKKAA). Residues 2325-2328 (PPSY) are interaction with Nedd4. Disordered regions lie at residues 2399–2452 (SGAG…PTSP), 2488–2524 (GGGG…APPQ), 2579–2620 (LDLN…PSSQ), and 2632–2703 (PSSQ…AIYI). Residues 2414–2429 (PYSNQSPPHSVQSSLA) are compositionally biased toward polar residues. Residue Ser-2447 is modified to Phosphoserine. Over residues 2488 to 2497 (GGGGGGGVGQ) the composition is skewed to gly residues. Low complexity predominate over residues 2598 to 2619 (PPSIQSSMSGSSPSTNMLSPSS). Residues 2632 to 2653 (PSSQHSGGHTPQHLVQTLDSYP) are compositionally biased toward polar residues. The segment covering 2659-2675 (SPGHWSSSSPRSNSDWS) has biased composition (low complexity). The span at 2677–2687 (GVQSPAANNLY) shows a compositional bias: polar residues.

Belongs to the NOTCH family. As to quaternary structure, homomer. Interacts with Su(H) when activated. Interacts with Dx via its ANK repeats. Interacts with Delta via the EGF repeats and the Delta EGF repeats. Interacts with Nedd4 and Su(dx). Interacts with O-fut1; the interaction glycosylates N and transports N to early endosomes. Interacts with Akap200; the interaction stabilizes N/Notch protein levels by preventing Cbl-mediated ubiquitination and subsequent lysosomal degradation of N/Notch. Post-translationally, upon binding its ligands such as Delta or Serrate, it is cleaved (S2 cleavage) in its extracellular domain, close to the transmembrane domain. S2 cleavage is probably mediated by Kuz. It is then cleaved (S3 cleavage) downstream of its transmembrane domain, releasing it from the cell membrane. S3 cleavage requires Psn. In terms of processing, O-glycosylated. Three forms of O-glycosylation (O-fucosylation, O-glucosylation and O-GlcNAcylation) are detected. O-fucosylated by O-fut1 and fng in the EGF repeat domain inhibits both Serrate/Ser- and Delta/Dl-binding. O-glucosylation by rumi in the endoplasmic reticulum is necessary for correct folding and signaling. Ubiquitinated by various ubiquitin ligases; which promotes ligand-independent endocytosis and proteasomal degradation. Ubiquitinated by Nedd4. May also be ubiquitinated by Su(dx) and Cbl. Mono-ubiquitinated, possibly by dx/deltex; this may be involved in the ESCRT-III mediated targeting to multivesicular bodies.

It is found in the cell membrane. The protein resides in the endosome. It localises to the multivesicular body. The protein localises to the nucleus. Functionally, essential signaling protein which has a major role in many developmental processes. Functions as a receptor for membrane-bound ligands Delta and Serrate to regulate cell-fate determination. Upon ligand activation, and releasing from the cell membrane, the Notch intracellular domain (NICD) forms a transcriptional activator complex with Su(H) (Suppressor of hairless) and activates genes of the E(spl) complex. Regulates oogenesis, the differentiation of the ectoderm and the development of the central and peripheral nervous system, eye, wing disk, muscles and segmental appendages such as antennae and legs, through lateral inhibition or induction. Regulates neuroblast self-renewal, identity and proliferation through the regulation of bHLH-O proteins; in larval brains, involved in the maintenance of type II neuroblast self-renewal and identity by suppressing erm expression together with pnt; might also regulate dpn expression through the activation of the transcriptional regulator Su(H). Targeted for ESCRT-mediated endosomal sequestration and lysosomal degradation by various E3 ubiquitin ligases to regulate the Notch signaling pathway. Can undergo ligand-dependent and non-canonical ligand-independent activation. Ligand-independent activation is dependent on endosome acidification and probably occurs in late endosomes or lysosome. Ectopic ligand-independent activation occurs when disruption of the endolysosomal pathway, particularly of the ESCRT-III complex, prevents sequestration of the receptor in intraluminal vesicles of multivesicular bodies. This chain is Neurogenic locus Notch protein, found in Drosophila melanogaster (Fruit fly).